The chain runs to 1011 residues: Rap guanine nucleotide exchange factor 4 (1011 aa).

Residues 216-291 (SRAPHMIRDR…DKYLFYRFLD (76 aa)) enclose the DEP domain. 3',5'-cyclic AMP contacts are provided by residues 422-425 (GKLA) and 432-433 (RA). One can recognise an N-terminal Ras-GEF domain in the interval 496 to 634 (QKYTVMSGTP…ELEKIVKQIS (139 aa)). Residues 772-1009 (SSKDLAYQMT…SQMSHRLEPR (238 aa)) form the Ras-GEF domain.

As to quaternary structure, interacts with RAP1B, RIMS1 and RIMS2. Probably part of a complex with RIMS2 and GTP-activated RAB3A. As to expression, expressed in cerebellum, pituitary, adrenal gland and liver.

The protein resides in the cytoplasm. It is found in the membrane. In terms of biological role, guanine nucleotide exchange factor (GEF) for RAP1A, RAP1B and RAP2A small GTPases that is activated by binding cAMP. Seems not to activate RAB3A. Involved in cAMP-dependent, PKA-independent exocytosis through interaction with RIMS2. This Mus musculus (Mouse) protein is Rap guanine nucleotide exchange factor 4 (Rapgef4).